Consider the following 92-residue polypeptide: Large ribosomal subunit protein bL25 (92 aa).

It belongs to the bacterial ribosomal protein bL25 family. Part of the 50S ribosomal subunit; part of the 5S rRNA/L5/L18/L25 subcomplex. Contacts the 5S rRNA. Binds to the 5S rRNA independently of L5 and L18.

This is one of the proteins that binds to the 5S RNA in the ribosome where it forms part of the central protuberance. This is Large ribosomal subunit protein bL25 from Vibrio parahaemolyticus serotype O3:K6 (strain RIMD 2210633).